Here is a 363-residue protein sequence, read N- to C-terminus: Forkhead box protein I1 (363 aa).

Low complexity predominate over residues 1–18 (MNPVQQPAQQRSPASSLP). Disordered regions lie at residues 1–24 (MNPV…KRAQ), 210–269 (DNGN…SPPA), and 344–363 (TTAQ…QGRY). A DNA-binding region (fork-head) is located at residues 125–219 (RPPYSYSALI…DNGNFRRKRK (95 aa)). The span at 231–243 (KIGEDHLNPKGKE) shows a compositional bias: basic and acidic residues. Composition is skewed to low complexity over residues 244–258 (SPPM…EPSP) and 347–363 (QKQP…QGRY).

It localises to the nucleus. Transcription factor. Essential for ventral specification of the early cephalic (head) ectoderm during gastrulation, playing a role in the 'non-neural' versus 'neural' cell fate choice. Binds to DNA via the target sequence 5'-[AG]TAAA[CT]A-3', with 5'-ATAAACA-3' being the preferred binding site. This is Forkhead box protein I1 from Xenopus tropicalis (Western clawed frog).